We begin with the raw amino-acid sequence, 64 residues long: Putative neurotoxin 4 (64 aa).

The N-terminal stretch at M1–A18 is a signal peptide.

The protein belongs to the scolopendra neurotoxin 6 family. Post-translationally, contains 3 disulfide bonds. As to expression, expressed by the venom gland.

Its subcellular location is the secreted. In Scolopendra mutilans (Chinese red-headed centipede), this protein is Putative neurotoxin 4.